We begin with the raw amino-acid sequence, 446 residues long: Adenylosuccinate synthetase (446 aa).

Residues 20–26 (GDEGKGK) and 48–50 (GHT) contribute to the GTP site. Asp21 serves as the catalytic Proton acceptor. Mg(2+)-binding residues include Asp21 and Gly48. IMP contacts are provided by residues 21–24 (DEGK), 46–49 (NAGH), Thr137, Arg151, Gln232, Thr247, and Arg319. Residue His49 is the Proton donor of the active site. 315 to 321 (SVTGRPR) serves as a coordination point for substrate. GTP-binding positions include Arg321, 347–349 (KLD), and 429–431 (STG).

Belongs to the adenylosuccinate synthetase family. Homodimer. The cofactor is Mg(2+).

It localises to the cytoplasm. The catalysed reaction is IMP + L-aspartate + GTP = N(6)-(1,2-dicarboxyethyl)-AMP + GDP + phosphate + 2 H(+). Its pathway is purine metabolism; AMP biosynthesis via de novo pathway; AMP from IMP: step 1/2. Functionally, plays an important role in the de novo pathway of purine nucleotide biosynthesis. Catalyzes the first committed step in the biosynthesis of AMP from IMP. This Ralstonia nicotianae (strain ATCC BAA-1114 / GMI1000) (Ralstonia solanacearum) protein is Adenylosuccinate synthetase.